The chain runs to 143 residues: Actin-depolymerizing factor 2 (143 aa).

The ADF-H domain occupies 5 to 139 (ASGMAVHDDC…GLDVFRSRAG (135 aa)).

The protein belongs to the actin-binding proteins ADF family.

Functionally, actin-depolymerizing protein. Severs actin filaments (F-actin) and binds to actin monomers. This chain is Actin-depolymerizing factor 2 (ADF2), found in Petunia hybrida (Petunia).